Reading from the N-terminus, the 281-residue chain is MITSAHIDDIRTQVRAWRAKGETVAFVPTMGNLHQGHITLVKEAAKKCDHVVASIFVNPMQFGQNEDLDAYPRTLEADSQALTAAGAELLFTPTPAIIYPKGLAQQTYVEVPGISDVLCGASRPGHFRGVATIVCKLFNIVQPDIAFFGNKDYQQLLVIRTMVEDLSLPIEIIGIDTIREASGLAMSSRNGYLTAQEKAAAPALKKAIDAMAQGIKQGISIEQVTEEAKASLTAAGFTPDYLEVRHADTLAKAETQDKALVILAAAYLGKARLIDNLRFDR.

Met-30–His-37 contributes to the ATP binding site. His-37 acts as the Proton donor in catalysis. Gln-61 lines the (R)-pantoate pocket. Position 61 (Gln-61) interacts with beta-alanine. Residue Gly-149–Asp-152 participates in ATP binding. (R)-pantoate is bound at residue Gln-155. ATP contacts are provided by residues Ile-178 and Met-186–Arg-189.

This sequence belongs to the pantothenate synthetase family. As to quaternary structure, homodimer.

Its subcellular location is the cytoplasm. It carries out the reaction (R)-pantoate + beta-alanine + ATP = (R)-pantothenate + AMP + diphosphate + H(+). The protein operates within cofactor biosynthesis; (R)-pantothenate biosynthesis; (R)-pantothenate from (R)-pantoate and beta-alanine: step 1/1. Its function is as follows. Catalyzes the condensation of pantoate with beta-alanine in an ATP-dependent reaction via a pantoyl-adenylate intermediate. This Shewanella oneidensis (strain ATCC 700550 / JCM 31522 / CIP 106686 / LMG 19005 / NCIMB 14063 / MR-1) protein is Pantothenate synthetase.